The chain runs to 207 residues: Thiamine-phosphate synthase (207 aa).

4-amino-2-methyl-5-(diphosphooxymethyl)pyrimidine is bound by residues 35-39 and asparagine 67; that span reads QYRDK. Residues aspartate 68 and aspartate 86 each coordinate Mg(2+). Threonine 105 is a 4-amino-2-methyl-5-(diphosphooxymethyl)pyrimidine binding site. 132 to 134 provides a ligand contact to 2-[(2R,5Z)-2-carboxy-4-methylthiazol-5(2H)-ylidene]ethyl phosphate; that stretch reads SVT. Position 135 (lysine 135) interacts with 4-amino-2-methyl-5-(diphosphooxymethyl)pyrimidine. Position 162 (glycine 162) interacts with 2-[(2R,5Z)-2-carboxy-4-methylthiazol-5(2H)-ylidene]ethyl phosphate.

The protein belongs to the thiamine-phosphate synthase family. Mg(2+) serves as cofactor.

It carries out the reaction 2-[(2R,5Z)-2-carboxy-4-methylthiazol-5(2H)-ylidene]ethyl phosphate + 4-amino-2-methyl-5-(diphosphooxymethyl)pyrimidine + 2 H(+) = thiamine phosphate + CO2 + diphosphate. The enzyme catalyses 2-(2-carboxy-4-methylthiazol-5-yl)ethyl phosphate + 4-amino-2-methyl-5-(diphosphooxymethyl)pyrimidine + 2 H(+) = thiamine phosphate + CO2 + diphosphate. It catalyses the reaction 4-methyl-5-(2-phosphooxyethyl)-thiazole + 4-amino-2-methyl-5-(diphosphooxymethyl)pyrimidine + H(+) = thiamine phosphate + diphosphate. Its pathway is cofactor biosynthesis; thiamine diphosphate biosynthesis; thiamine phosphate from 4-amino-2-methyl-5-diphosphomethylpyrimidine and 4-methyl-5-(2-phosphoethyl)-thiazole: step 1/1. Its function is as follows. Condenses 4-methyl-5-(beta-hydroxyethyl)thiazole monophosphate (THZ-P) and 2-methyl-4-amino-5-hydroxymethyl pyrimidine pyrophosphate (HMP-PP) to form thiamine monophosphate (TMP). The sequence is that of Thiamine-phosphate synthase from Pseudomonas putida (strain ATCC 47054 / DSM 6125 / CFBP 8728 / NCIMB 11950 / KT2440).